The sequence spans 247 residues: MKFGKRLKRQIEESLPEWRDHFLNYKELKRRLNAVSSPDPAAEARFLALLHAEVDKFNAFFLEQEEDFVIRQRELQERIQSSSSAAAEMEGRVRREVVDLHGEMVLLLNYSSINYTGLAKILKKYDKRTGGVLRLPVIAGVLRQPFYATDLLSSLVRDCEAIMDAVFPSLPSPSAAAAAAARAAAEQAIFRNTVAALLTMQEVRSGSSTYGHFSLPPMTPLPDSDWLIQSVQPPPPPPPSSPLIIPT.

The region spanning 1–139 is the SPX domain; the sequence is MKFGKRLKRQ…GGVLRLPVIA (139 aa). The disordered stretch occupies residues 224-247; the sequence is SDWLIQSVQPPPPPPPSSPLIIPT. Residues 232–241 show a composition bias toward pro residues; the sequence is QPPPPPPPSS.

This Oryza sativa subsp. indica (Rice) protein is SPX domain-containing protein 5 (SPX5).